Reading from the N-terminus, the 286-residue chain is 4-hydroxybenzoate octaprenyltransferase (286 aa).

The next 7 membrane-spanning stretches (helical) occupy residues 22–42 (IGTLLLLWPTLWALYLAEKAM), 45–65 (LSVLAIFICGVFLMRSAGCVI), 98–118 (LFIVLVFCSFLLVLCLNLYTI), 143–163 (FFLGAAFGWSIPMAYGATIEA), 213–233 (IIALLQIITLIFLFSVGYLSQ), 238–255 (YFIVLAIAGLFFVYQCRL), and 266–286 (NAFLNNNYFGLTVFIAVLFGI).

It belongs to the UbiA prenyltransferase family. Mg(2+) is required as a cofactor.

Its subcellular location is the cell inner membrane. The enzyme catalyses all-trans-octaprenyl diphosphate + 4-hydroxybenzoate = 4-hydroxy-3-(all-trans-octaprenyl)benzoate + diphosphate. It participates in cofactor biosynthesis; ubiquinone biosynthesis. In terms of biological role, catalyzes the prenylation of para-hydroxybenzoate (PHB) with an all-trans polyprenyl group. Mediates the second step in the final reaction sequence of ubiquinone-8 (UQ-8) biosynthesis, which is the condensation of the polyisoprenoid side chain with PHB, generating the first membrane-bound Q intermediate 3-octaprenyl-4-hydroxybenzoate. This chain is 4-hydroxybenzoate octaprenyltransferase, found in Histophilus somni (strain 129Pt) (Haemophilus somnus).